The chain runs to 334 residues: Ribosomal RNA small subunit methyltransferase H (334 aa).

The tract at residues 1 to 21 is disordered; that stretch reads MNALPIRTAAPSGHSGGHSST. Residues 52 to 54, D71, F98, D119, and Q126 each bind S-adenosyl-L-methionine; that span reads GGY.

Belongs to the methyltransferase superfamily. RsmH family.

It is found in the cytoplasm. It carries out the reaction cytidine(1402) in 16S rRNA + S-adenosyl-L-methionine = N(4)-methylcytidine(1402) in 16S rRNA + S-adenosyl-L-homocysteine + H(+). Functionally, specifically methylates the N4 position of cytidine in position 1402 (C1402) of 16S rRNA. The sequence is that of Ribosomal RNA small subunit methyltransferase H from Granulibacter bethesdensis (strain ATCC BAA-1260 / CGDNIH1).